A 336-amino-acid chain; its full sequence is Histidinol-phosphate aminotransferase (336 aa).

At Lys-204 the chain carries N6-(pyridoxal phosphate)lysine.

The protein belongs to the class-II pyridoxal-phosphate-dependent aminotransferase family. Histidinol-phosphate aminotransferase subfamily. It depends on pyridoxal 5'-phosphate as a cofactor.

The catalysed reaction is L-histidinol phosphate + 2-oxoglutarate = 3-(imidazol-4-yl)-2-oxopropyl phosphate + L-glutamate. It participates in amino-acid biosynthesis; L-histidine biosynthesis; L-histidine from 5-phospho-alpha-D-ribose 1-diphosphate: step 7/9. The sequence is that of Histidinol-phosphate aminotransferase from Thermococcus kodakarensis (strain ATCC BAA-918 / JCM 12380 / KOD1) (Pyrococcus kodakaraensis (strain KOD1)).